We begin with the raw amino-acid sequence, 1172 residues long: Pesticidal crystal protein Cry1Ha (1172 aa).

It belongs to the delta endotoxin family.

Its function is as follows. Promotes colloidosmotic lysis by binding to the midgut epithelial cells of insects. In Bacillus thuringiensis, this protein is Pesticidal crystal protein Cry1Ha (cry1Ha).